We begin with the raw amino-acid sequence, 176 residues long: Large ribosomal subunit protein uL22 (176 aa).

The interval 113-176 (VVESRPSKDQ…EISEAKGGSD (64 aa)) is disordered. Residues 136-152 (SKAAATAPAKKSSASKA) show a composition bias toward low complexity. Basic and acidic residues predominate over residues 159–176 (TKAESKTSEISEAKGGSD).

It belongs to the universal ribosomal protein uL22 family. In terms of assembly, part of the 50S ribosomal subunit.

This protein binds specifically to 23S rRNA; its binding is stimulated by other ribosomal proteins, e.g. L4, L17, and L20. It is important during the early stages of 50S assembly. It makes multiple contacts with different domains of the 23S rRNA in the assembled 50S subunit and ribosome. Its function is as follows. The globular domain of the protein is located near the polypeptide exit tunnel on the outside of the subunit, while an extended beta-hairpin is found that lines the wall of the exit tunnel in the center of the 70S ribosome. This chain is Large ribosomal subunit protein uL22, found in Mycobacterium ulcerans (strain Agy99).